Here is a 937-residue protein sequence, read N- to C-terminus: Translation initiation factor IF-2 (937 aa).

Positions 47-352 (RAAFQTKATP…EMPQRKERPL (306 aa)) are disordered. The segment covering 52–68 (TKATPAASKPATPAAPK) has biased composition (low complexity). Positions 97-116 (QHSNNRPQANANRNGQASNG) are enriched in polar residues. Low complexity predominate over residues 117 to 153 (QNRTNNARPNNNSARPNNSRPNTNSRPNNNSQNRSTS). Over residues 154–169 (ANHPMSLQEQISQANA) the composition is skewed to polar residues. Over residues 173–197 (RTQERIQQQREQREADEKKRREQAN) the composition is skewed to basic and acidic residues. Positions 202–229 (TRNNASNNRPSNGKPTNGARPTTNSPRP) are enriched in polar residues. The segment covering 240-269 (SSRPNNNNSARPNTTNNRPTNSRPATTPSR) has biased composition (low complexity). Residues 274-298 (QEMQQKMQANTVSASKPASNNTASK) show a composition bias toward polar residues. Residues 322–331 (FNKKRKKTRK) show a composition bias toward basic residues. The span at 339–352 (AAKKEMPQRKERPL) shows a compositional bias: basic and acidic residues. Residues 438-607 (SRPPVVTIMG…LLEADVLELK (170 aa)) enclose the tr-type G domain. A G1 region spans residues 447–454 (GHVDHGKT). 447 to 454 (GHVDHGKT) provides a ligand contact to GTP. Residues 472–476 (GITQH) form a G2 region. The tract at residues 493 to 496 (DTPG) is G3. GTP contacts are provided by residues 493 to 497 (DTPGH) and 547 to 550 (NKID). The segment at 547 to 550 (NKID) is G4. The G5 stretch occupies residues 583 to 585 (SAK).

This sequence belongs to the TRAFAC class translation factor GTPase superfamily. Classic translation factor GTPase family. IF-2 subfamily.

It is found in the cytoplasm. In terms of biological role, one of the essential components for the initiation of protein synthesis. Protects formylmethionyl-tRNA from spontaneous hydrolysis and promotes its binding to the 30S ribosomal subunits. Also involved in the hydrolysis of GTP during the formation of the 70S ribosomal complex. The polypeptide is Translation initiation factor IF-2 (Latilactobacillus sakei subsp. sakei (strain 23K) (Lactobacillus sakei subsp. sakei)).